The sequence spans 253 residues: Ribonuclease PH (253 aa).

Phosphate is bound by residues R86 and 124-126 (GTR).

Belongs to the RNase PH family. In terms of assembly, homohexameric ring arranged as a trimer of dimers.

It catalyses the reaction tRNA(n+1) + phosphate = tRNA(n) + a ribonucleoside 5'-diphosphate. In terms of biological role, phosphorolytic 3'-5' exoribonuclease that plays an important role in tRNA 3'-end maturation. Removes nucleotide residues following the 3'-CCA terminus of tRNAs; can also add nucleotides to the ends of RNA molecules by using nucleoside diphosphates as substrates, but this may not be physiologically important. Probably plays a role in initiation of 16S rRNA degradation (leading to ribosome degradation) during starvation. This chain is Ribonuclease PH, found in Brevibacillus brevis (strain 47 / JCM 6285 / NBRC 100599).